The chain runs to 968 residues: MPFTLGQRWISDTESELGLGTVVAVDARTVTLLFPSTGENRLYARSDSPVTRVMFNPGDTITSHDGWQMQVEEVKEENGLLTYIGTRLDTEESGVALREVFLDSKLVFSKPQDRLFAGQIDRMDRFALRYRARKYSSEQFRMPYSGLRGQRTSLIPHQLNIAHDVGRRHAPRVLLADEVGLGKTIEAGMILHQQLLSGAAERVLIIVPETLQHQWLVEMLRRFNLRFALFDDERYAEAQHDAYNPFDTEQLVICSLDFARRSKQRLEHLCEAEWDLLVVDEAHHLVWSEDAPSREYQAIEQLAEHVPGVLLLTATPEQLGMESHFARLRLLDPNRFHDFAQFVEEQKNYRPVADAVAMLLAGNKLSNDELNMLGEMIGEQDIEPLLQAANSDSEDAQSARQELVSMLMDRHGTSRVLFRNTRNGVKGFPKRELHTIKLPLPTQYQTAIKVSGIMGARKSAEDRARDMLYPERIYQEFEGDNATWWNFDPRVEWLMGYLTSHRSQKVLVICAKAATALQLEQVLREREGIRAAVFHEGMSIIERDRAAAWFAEEDTGAQVLLCSEIGSEGRNFQFASHMVMFDLPFNPDLLEQRIGRLDRIGQAHDIQIHVPYLEKTAQSVLVRWYHEGLDAFEHTCPTGRTIYDSVYNDLINYLASPDQTEGFDDLIKNCREQHEALKAQLEQGRDRLLEIHSNGGEKAQALAESIEEQDDDTNLIAFAMNLLDIIGINQDDRGDNMIVLTPSDHMLVPDFPGLSEDGITITFDREVALAREDAQFITWEHPLIRNGLDLILSGDTGSSTISLLKNKALPVGTLLVELIYVVEAQAPKQLQLNRFLPPTPVRMLLDKNGNNLAAQVEFETFNRQLNAVNRHTGSKLVNAVQQDVHAILQLGEAQIEKSARALIDAARNEADEKLSAELSRLEALRAVNPNIRDDELTAIESNRQQVMESLDQAGWRLDALRLIVVTHQ.

One can recognise a Helicase ATP-binding domain in the interval 164 to 334 (DVGRRHAPRV…FARLRLLDPN (171 aa)). 177 to 184 (DEVGLGKT) contributes to the ATP binding site. Positions 280–283 (DEAH) match the DEAH box motif. Residues 490–662 (RVEWLMGYLT…YLASPDQTEG (173 aa)) form the Helicase C-terminal domain.

The protein belongs to the SNF2/RAD54 helicase family. RapA subfamily. In terms of assembly, interacts with the RNAP. Has a higher affinity for the core RNAP than for the holoenzyme. Its ATPase activity is stimulated by binding to RNAP.

Its function is as follows. Transcription regulator that activates transcription by stimulating RNA polymerase (RNAP) recycling in case of stress conditions such as supercoiled DNA or high salt concentrations. Probably acts by releasing the RNAP, when it is trapped or immobilized on tightly supercoiled DNA. Does not activate transcription on linear DNA. Probably not involved in DNA repair. In Shigella boydii serotype 18 (strain CDC 3083-94 / BS512), this protein is RNA polymerase-associated protein RapA.